A 330-amino-acid polypeptide reads, in one-letter code: Induced myeloid leukemia cell differentiation protein Mcl-1 homolog (330 aa).

The tract at residues 85 to 155 (LAVPPEEMAA…PPEEEDDELY (71 aa)) is PEST-like. Position 101 is a phosphoserine (serine 101). Lysine 116 is covalently cross-linked (Glycyl lysine isopeptide (Lys-Gly) (interchain with G-Cter in ubiquitin)). The interval 129–153 (EAAKSSGADGSLPSTPPPPEEEDDE) is disordered. Phosphoserine; by GSK3-alpha and GSK3-beta is present on serine 139. A Phosphoserine modification is found at serine 142. At threonine 143 the chain carries Phosphothreonine; by MAPK. Residues lysine 174 and lysine 177 each participate in a glycyl lysine isopeptide (Lys-Gly) (interchain with G-Cter in ubiquitin) cross-link. The short motif at 189–203 (ALETLRRVGDGVQRN) is the BH3 element. The short motif at 232–252 (HVFKDGVTNWGRIVTLISFGA) is the BH1 element. Positions 284 to 299 (DWLVKQRGWDGFVEFF) match the BH2 motif. Residues 307 to 329 (GIRNVLLAFAGVAGVGAGLAYLI) traverse the membrane as a helical segment.

Belongs to the Bcl-2 family. In terms of assembly, interacts with HIF3A (via C-terminus domain). Interacts with BOK, BIK, BAX, BAK1, and TPT1. Interacts with unphosphorylated BAD. Interacts with BMF, BBC3 and PMAIP1. Interacts with BOP. Interacts with BCL2L11; may sequester BCL2L11 to prevent its pro-apoptotic activity. Interacts with GIMAP5 and HSPA8/HSC70; the interaction between HSPA8 and MCL1 is impaired in the absence of GIMAP5. Post-translationally, cleaved by CASP3 during apoptosis, yielding a pro-apoptotic C-terminal fragment. Rapidly degraded in the absence of phosphorylation in the PEST region. In terms of processing, phosphorylated on Ser-139, by GSK3, in response to IL3/interleukin-3 withdrawal. Phosphorylation at Ser-139 induces ubiquitination and proteasomal degradation, abrogating the anti-apoptotic activity. Treatment with taxol or okadaic acid induces phosphorylation on additional sites. Post-translationally, ubiquitinated. Ubiquitination is induced by phosphorylation at Ser-139. Deubiquitinated by USP20; leading to increased stability. As to expression, ubiquitous. Highly expressed in heart, spleen, lung, liver, skeletal muscle and kidney. Detected at lower levels in brain, ovary, oviduct and testis.

Its subcellular location is the membrane. It localises to the cytoplasm. The protein resides in the mitochondrion. It is found in the nucleus. The protein localises to the nucleoplasm. Involved in the regulation of apoptosis versus cell survival, and in the maintenance of viability but not of proliferation. Mediates its effects by interactions with a number of other regulators of apoptosis. The chain is Induced myeloid leukemia cell differentiation protein Mcl-1 homolog (Mcl1) from Rattus norvegicus (Rat).